A 247-amino-acid chain; its full sequence is 14-3-3 protein gamma-B (247 aa).

Belongs to the 14-3-3 family. As to quaternary structure, homodimer, and heterodimer with other family members.

It is found in the cytoplasm. Functionally, adapter protein implicated in the regulation of a large spectrum of both general and specialized signaling pathways. Binds to a large number of partners, usually by recognition of a phosphoserine or phosphothreonine motif. Binding generally results in the modulation of the activity of the binding partner. The protein is 14-3-3 protein gamma-B (ywhag-b) of Xenopus laevis (African clawed frog).